A 452-amino-acid polypeptide reads, in one-letter code: cAMP-dependent protein kinase regulatory subunit (452 aa).

A dimerization and phosphorylation region spans residues Q28–F212. The disordered stretch occupies residues I74–P163. Residues M75–F84 show a composition bias toward polar residues. Basic and acidic residues predominate over residues S95 to E106. S173 bears the Phosphoserine mark. A nucleoside 3',5'-cyclic phosphate-binding positions include L213–D330 and V333–S451. The 3',5'-cyclic AMP site is built by E278, R287, E399, and R408.

This sequence belongs to the cAMP-dependent kinase regulatory chain family. As to quaternary structure, tetramer, composed of 2 regulatory (R) and 2 catalytic (C) subunits. In the presence of cAMP it dissociates into 2 active monomeric C subunits and an R dimer.

The polypeptide is cAMP-dependent protein kinase regulatory subunit (PKAR) (Debaryomyces hansenii (strain ATCC 36239 / CBS 767 / BCRC 21394 / JCM 1990 / NBRC 0083 / IGC 2968) (Yeast)).